We begin with the raw amino-acid sequence, 1107 residues long: Miniconductance mechanosensitive channel MscM (1107 aa).

A signal peptide spans 1–19; it reads MRLIITFLMAWCLSWGAYA. The next 11 helical transmembrane spans lie at 467–487, 522–542, 551–571, 600–620, 628–648, 674–694, 698–718, 785–805, 828–848, 875–895, and 910–930; these read VMML…ILVG, LFWS…LGYG, LAVA…VVMI, YLMS…FDNL, SLGR…TLSL, MMIG…LATA, LARL…YHVI, ILML…HSAF, PITL…TQLV, TITK…MIGI, and GLGF…IILF.

The protein belongs to the MscS (TC 1.A.23) family. In terms of assembly, homoheptamer.

The protein localises to the cell inner membrane. Its function is as follows. Mechanosensitive channel that protects cells against hypoosmotic stress when highly overexpressed. Gates spontaneously in response to increased membrane tension. The polypeptide is Miniconductance mechanosensitive channel MscM (mscM) (Escherichia coli (strain K12)).